Consider the following 356-residue polypeptide: DNA polymerase IV (356 aa).

The 188-residue stretch at M1–G188 folds into the UmuC domain. Mg(2+)-binding residues include D11 and D106. The active site involves E107.

Belongs to the DNA polymerase type-Y family. Monomer. The cofactor is Mg(2+).

It localises to the cytoplasm. The enzyme catalyses DNA(n) + a 2'-deoxyribonucleoside 5'-triphosphate = DNA(n+1) + diphosphate. Its function is as follows. Poorly processive, error-prone DNA polymerase involved in untargeted mutagenesis. Copies undamaged DNA at stalled replication forks, which arise in vivo from mismatched or misaligned primer ends. These misaligned primers can be extended by PolIV. Exhibits no 3'-5' exonuclease (proofreading) activity. May be involved in translesional synthesis, in conjunction with the beta clamp from PolIII. This is DNA polymerase IV from Listeria monocytogenes serotype 4b (strain F2365).